Here is a 267-residue protein sequence, read N- to C-terminus: NAD kinase (267 aa).

Asp-45 (proton acceptor) is an active-site residue. NAD(+)-binding positions include 45 to 46, 123 to 124, Arg-149, Asp-151, Ala-186, and Asn-226; these read DG and NE.

The protein belongs to the NAD kinase family. The cofactor is a divalent metal cation.

The protein localises to the cytoplasm. The catalysed reaction is NAD(+) + ATP = ADP + NADP(+) + H(+). In terms of biological role, involved in the regulation of the intracellular balance of NAD and NADP, and is a key enzyme in the biosynthesis of NADP. Catalyzes specifically the phosphorylation on 2'-hydroxyl of the adenosine moiety of NAD to yield NADP. This is NAD kinase from Shouchella clausii (strain KSM-K16) (Alkalihalobacillus clausii).